Here is a 198-residue protein sequence, read N- to C-terminus: uncharacterized protein (198 aa).

The 110-residue stretch at 1 to 110 folds into the PA14 domain; it reads MTGYFLPPQT…GTTVSDDFEG (110 aa).

The protein belongs to the flocculin family.

This is an uncharacterized protein from Saccharomyces cerevisiae (strain ATCC 204508 / S288c) (Baker's yeast).